Consider the following 329-residue polypeptide: Glycerol-3-phosphate dehydrogenase [NAD(P)+] (329 aa).

Residues S13, W14, H34, and K105 each coordinate NADPH. 3 residues coordinate sn-glycerol 3-phosphate: K105, G134, and S136. A138 contacts NADPH. The sn-glycerol 3-phosphate site is built by K189, D242, S252, R253, and N254. The Proton acceptor role is filled by K189. Residue R253 participates in NADPH binding. Residues V277 and E279 each contribute to the NADPH site.

This sequence belongs to the NAD-dependent glycerol-3-phosphate dehydrogenase family.

The protein resides in the cytoplasm. The enzyme catalyses sn-glycerol 3-phosphate + NAD(+) = dihydroxyacetone phosphate + NADH + H(+). It catalyses the reaction sn-glycerol 3-phosphate + NADP(+) = dihydroxyacetone phosphate + NADPH + H(+). It functions in the pathway membrane lipid metabolism; glycerophospholipid metabolism. In terms of biological role, catalyzes the reduction of the glycolytic intermediate dihydroxyacetone phosphate (DHAP) to sn-glycerol 3-phosphate (G3P), the key precursor for phospholipid synthesis. This chain is Glycerol-3-phosphate dehydrogenase [NAD(P)+], found in Legionella pneumophila (strain Corby).